A 364-amino-acid chain; its full sequence is tRNA 2-selenouridine synthase (364 aa).

Positions 14 to 137 (LIADTPIIDV…LRQTAIQATI (124 aa)) constitute a Rhodanese domain. Cys-97 functions as the S-selanylcysteine intermediate in the catalytic mechanism.

Belongs to the SelU family. Monomer.

The catalysed reaction is 5-methylaminomethyl-2-thiouridine(34) in tRNA + selenophosphate + (2E)-geranyl diphosphate + H2O + H(+) = 5-methylaminomethyl-2-selenouridine(34) in tRNA + (2E)-thiogeraniol + phosphate + diphosphate. It catalyses the reaction 5-methylaminomethyl-2-thiouridine(34) in tRNA + (2E)-geranyl diphosphate = 5-methylaminomethyl-S-(2E)-geranyl-thiouridine(34) in tRNA + diphosphate. The enzyme catalyses 5-methylaminomethyl-S-(2E)-geranyl-thiouridine(34) in tRNA + selenophosphate + H(+) = 5-methylaminomethyl-2-(Se-phospho)selenouridine(34) in tRNA + (2E)-thiogeraniol. It carries out the reaction 5-methylaminomethyl-2-(Se-phospho)selenouridine(34) in tRNA + H2O = 5-methylaminomethyl-2-selenouridine(34) in tRNA + phosphate. Functionally, involved in the post-transcriptional modification of the uridine at the wobble position (U34) of tRNA(Lys), tRNA(Glu) and tRNA(Gln). Catalyzes the conversion of 2-thiouridine (S2U-RNA) to 2-selenouridine (Se2U-RNA). Acts in a two-step process involving geranylation of 2-thiouridine (S2U) to S-geranyl-2-thiouridine (geS2U) and subsequent selenation of the latter derivative to 2-selenouridine (Se2U) in the tRNA chain. The sequence is that of tRNA 2-selenouridine synthase from Escherichia coli (strain SE11).